The primary structure comprises 444 residues: Exodeoxyribonuclease 7 large subunit (444 aa).

It belongs to the XseA family. In terms of assembly, heterooligomer composed of large and small subunits.

Its subcellular location is the cytoplasm. The catalysed reaction is Exonucleolytic cleavage in either 5'- to 3'- or 3'- to 5'-direction to yield nucleoside 5'-phosphates.. In terms of biological role, bidirectionally degrades single-stranded DNA into large acid-insoluble oligonucleotides, which are then degraded further into small acid-soluble oligonucleotides. This is Exodeoxyribonuclease 7 large subunit from Aliivibrio salmonicida (strain LFI1238) (Vibrio salmonicida (strain LFI1238)).